Here is a 414-residue protein sequence, read N- to C-terminus: MEATTKKMAMIEIGKGWAASCLEARTCVISNEEDIYAEPRADTPVLKLDSTVRTALPPGYGIVISGTARNHKTAWEIVPGLVDSGYTGLLGLLLVPTDETPATGSAGGGIVSFSRGGVHARLTVIKLVPDDIMGACGAGAQRLPLKTAITSFKGDEDLLGNGFDHCMESLASIYPDILHVQLDCPVYFGCTGCKAFYRRLGSCLETRPLNELGSDHIYLRRGSAYESVNRFAAPDDVMFVAMYGKWLLIGMAETPNEKLTVELRDDDSSPAALIPFHDTFGQKEAEDAGYDIRAPENCTLPPGGSVRVILRQKLHMGKGRAAFVMGRSSMNLKGVLVEPERVVDDEWVSFNITNIRDAAAFFRKNDRIAQLVALEDKLELMGGVDALPWRVVQSVQEEKKNSSRGDKGFGSSGV.

Substrate-binding positions include 327–329 (RSS) and 409–410 (FG).

This sequence belongs to the dUTPase family. Requires Mg(2+) as cofactor.

The catalysed reaction is dUTP + H2O = dUMP + diphosphate + H(+). Involved in nucleotide metabolism: produces dUMP, the immediate precursor of thymidine nucleotides and decreases the intracellular concentration of dUTP to avoid uracil incorporation into viral DNA. This Amazona oratrix (yellow-headed parrot) protein is Deoxyuridine 5'-triphosphate nucleotidohydrolase.